Here is a 43-residue protein sequence, read N- to C-terminus: Defensin, isoforms B and C (43 aa).

3 disulfide bridges follow: C3–C34, C20–C40, and C24–C42.

Belongs to the invertebrate defensin family. Type 1 subfamily.

It is found in the secreted. Its function is as follows. Involved in anti Gram-positive activity of immune hemolymph of Z.atratus. This Zophobas atratus (Giant mealworm beetle) protein is Defensin, isoforms B and C.